A 320-amino-acid polypeptide reads, in one-letter code: Malate dehydrogenase 2 (320 aa).

NAD(+) is bound by residues 10-15 and Asp-34; that span reads GAGQIG. Residues Arg-83 and Arg-89 each coordinate substrate. Residues Asn-96 and 119-121 contribute to the NAD(+) site; that span reads ITN. Substrate-binding residues include Asn-121 and Arg-152. His-176 functions as the Proton acceptor in the catalytic mechanism.

It belongs to the LDH/MDH superfamily. MDH type 3 family.

The catalysed reaction is (S)-malate + NAD(+) = oxaloacetate + NADH + H(+). Catalyzes the reversible oxidation of malate to oxaloacetate. In Rhodopseudomonas palustris (strain BisB18), this protein is Malate dehydrogenase 2.